A 71-amino-acid polypeptide reads, in one-letter code: ATP synthase subunit c (71 aa).

2 helical membrane passes run 4 to 24 (AVIG…GIGI) and 48 to 68 (IIGA…AFMI).

It belongs to the ATPase C chain family. In terms of assembly, F-type ATPases have 2 components, F(1) - the catalytic core - and F(0) - the membrane proton channel. F(1) has five subunits: alpha(3), beta(3), gamma(1), delta(1), epsilon(1). F(0) has three main subunits: a(1), b(2) and c(10-14). The alpha and beta chains form an alternating ring which encloses part of the gamma chain. F(1) is attached to F(0) by a central stalk formed by the gamma and epsilon chains, while a peripheral stalk is formed by the delta and b chains.

Its subcellular location is the cell membrane. Its function is as follows. F(1)F(0) ATP synthase produces ATP from ADP in the presence of a proton or sodium gradient. F-type ATPases consist of two structural domains, F(1) containing the extramembraneous catalytic core and F(0) containing the membrane proton channel, linked together by a central stalk and a peripheral stalk. During catalysis, ATP synthesis in the catalytic domain of F(1) is coupled via a rotary mechanism of the central stalk subunits to proton translocation. Key component of the F(0) channel; it plays a direct role in translocation across the membrane. A homomeric c-ring of between 10-14 subunits forms the central stalk rotor element with the F(1) delta and epsilon subunits. This Clostridium botulinum (strain Alaska E43 / Type E3) protein is ATP synthase subunit c.